Reading from the N-terminus, the 150-residue chain is Cytochrome c oxidase subunit 5A, mitochondrial (150 aa).

A mitochondrion-targeting transit peptide spans 1–41 (MLGAALRRCAVAATTRAGPRGLLHSARTPGPAAAIQSVRCY). Positions 2–17 (LGAALRRCAVAATTRA) match the SIFI-degron motif. 2 positions are modified to N6-acetyllysine: lysine 87 and lysine 113. Threonine 141 carries the phosphothreonine modification.

This sequence belongs to the cytochrome c oxidase subunit 5A family. As to quaternary structure, component of the cytochrome c oxidase (complex IV, CIV), a multisubunit enzyme composed of 14 subunits. The complex is composed of a catalytic core of 3 subunits MT-CO1, MT-CO2 and MT-CO3, encoded in the mitochondrial DNA, and 11 supernumerary subunits COX4I, COX5A, COX5B, COX6A, COX6B, COX6C, COX7A, COX7B, COX7C, COX8 and NDUFA4, which are encoded in the nuclear genome. The complex exists as a monomer or a dimer and forms supercomplexes (SCs) in the inner mitochondrial membrane with NADH-ubiquinone oxidoreductase (complex I, CI) and ubiquinol-cytochrome c oxidoreductase (cytochrome b-c1 complex, complex III, CIII), resulting in different assemblies (supercomplex SCI(1)III(2)IV(1) and megacomplex MCI(2)III(2)IV(2)). Interacts with AFG1L. Interacts with RAB5IF. In response to mitochondrial stress, the precursor protein is ubiquitinated by the SIFI complex in the cytoplasm before mitochondrial import, leading to its degradation. Within the SIFI complex, UBR4 initiates ubiquitin chain that are further elongated or branched by KCMF1.

The protein localises to the mitochondrion inner membrane. The protein operates within energy metabolism; oxidative phosphorylation. Component of the cytochrome c oxidase, the last enzyme in the mitochondrial electron transport chain which drives oxidative phosphorylation. The respiratory chain contains 3 multisubunit complexes succinate dehydrogenase (complex II, CII), ubiquinol-cytochrome c oxidoreductase (cytochrome b-c1 complex, complex III, CIII) and cytochrome c oxidase (complex IV, CIV), that cooperate to transfer electrons derived from NADH and succinate to molecular oxygen, creating an electrochemical gradient over the inner membrane that drives transmembrane transport and the ATP synthase. Cytochrome c oxidase is the component of the respiratory chain that catalyzes the reduction of oxygen to water. Electrons originating from reduced cytochrome c in the intermembrane space (IMS) are transferred via the dinuclear copper A center (CU(A)) of subunit 2 and heme A of subunit 1 to the active site in subunit 1, a binuclear center (BNC) formed by heme A3 and copper B (CU(B)). The BNC reduces molecular oxygen to 2 water molecules using 4 electrons from cytochrome c in the IMS and 4 protons from the mitochondrial matrix. The polypeptide is Cytochrome c oxidase subunit 5A, mitochondrial (COX5A) (Gorilla gorilla gorilla (Western lowland gorilla)).